The primary structure comprises 203 residues: Holliday junction branch migration complex subunit RuvA (203 aa).

A domain I region spans residues 1–63 (MIGKLSGKID…EEHIHLYGFL (63 aa)). The segment at 64 to 142 (TIEEKNFFNL…KISTGAAIIN (79 aa)) is domain II. The flexible linker stretch occupies residues 143-149 (DSLNIKN). The interval 150–203 (ITSVASNEVIKALVNLGFSRFEAQNSVQGIVIQNPEISIDELIKTALKNRNAGL) is domain III.

Belongs to the RuvA family. In terms of assembly, homotetramer. Forms an RuvA(8)-RuvB(12)-Holliday junction (HJ) complex. HJ DNA is sandwiched between 2 RuvA tetramers; dsDNA enters through RuvA and exits via RuvB. An RuvB hexamer assembles on each DNA strand where it exits the tetramer. Each RuvB hexamer is contacted by two RuvA subunits (via domain III) on 2 adjacent RuvB subunits; this complex drives branch migration. In the full resolvosome a probable DNA-RuvA(4)-RuvB(12)-RuvC(2) complex forms which resolves the HJ.

It is found in the cytoplasm. Its function is as follows. The RuvA-RuvB-RuvC complex processes Holliday junction (HJ) DNA during genetic recombination and DNA repair, while the RuvA-RuvB complex plays an important role in the rescue of blocked DNA replication forks via replication fork reversal (RFR). RuvA specifically binds to HJ cruciform DNA, conferring on it an open structure. The RuvB hexamer acts as an ATP-dependent pump, pulling dsDNA into and through the RuvAB complex. HJ branch migration allows RuvC to scan DNA until it finds its consensus sequence, where it cleaves and resolves the cruciform DNA. The polypeptide is Holliday junction branch migration complex subunit RuvA (Rickettsia akari (strain Hartford)).